We begin with the raw amino-acid sequence, 138 residues long: Putative thioredoxin-like protein 453L (138 aa).

A Thioredoxin domain is found at 3 to 138 (QQKYFEKPVY…FNNIVNYVMG (136 aa)). Catalysis depends on nucleophile residues cysteine 44 and cysteine 47. Cysteine 44 and cysteine 47 form a disulfide bridge.

Belongs to the thioredoxin family.

Participates in various redox reactions through the reversible oxidation of its active center dithiol to a disulfide and catalyzes dithiol-disulfide exchange reactions. The chain is Putative thioredoxin-like protein 453L from Acheta domesticus (House cricket).